A 146-amino-acid chain; its full sequence is MIF-like protein mif-3 (146 aa).

The protein belongs to the MIF family.

The chain is MIF-like protein mif-3 (mif-3) from Caenorhabditis elegans.